A 189-amino-acid chain; its full sequence is MPRPENPIQLAVIGAAHGTRGEVRVKTFTGDPLAIAEYGLLYDEQGKSYEVLEARPAKTVVVVRFKGINDRNAAEALNGTELFIDRSQLPDDELDEDEFFQTDLIGLLAVDAEGKTYGVVSALFDFGGGDLIELSEKGKRPMLIPFTEAAVPEIDLDKGTLLVEPYAAGLIADDEDERPQNEKKKPKKS.

The region spanning 96–169 (EDEFFQTDLI…TLLVEPYAAG (74 aa)) is the PRC barrel domain. Residues 170 to 189 (LIADDEDERPQNEKKKPKKS) form a disordered region.

The protein belongs to the RimM family. As to quaternary structure, binds ribosomal protein uS19.

It is found in the cytoplasm. Its function is as follows. An accessory protein needed during the final step in the assembly of 30S ribosomal subunit, possibly for assembly of the head region. Essential for efficient processing of 16S rRNA. May be needed both before and after RbfA during the maturation of 16S rRNA. It has affinity for free ribosomal 30S subunits but not for 70S ribosomes. This Brucella anthropi (strain ATCC 49188 / DSM 6882 / CCUG 24695 / JCM 21032 / LMG 3331 / NBRC 15819 / NCTC 12168 / Alc 37) (Ochrobactrum anthropi) protein is Ribosome maturation factor RimM.